The primary structure comprises 50 residues: uncharacterized protein (50 aa).

This is an uncharacterized protein from Sulfolobus islandicus filamentous virus (isolate Iceland/Hveragerdi) (SIFV).